A 465-amino-acid chain; its full sequence is Ribulose bisphosphate carboxylase large chain (465 aa).

At Lys-4 the chain carries N6,N6,N6-trimethyllysine. Substrate is bound by residues Asn-113 and Thr-163. Residue Lys-165 is the Proton acceptor of the active site. Lys-167 is a binding site for substrate. Residues Lys-191, Asp-193, and Glu-194 each coordinate Mg(2+). The residue at position 191 (Lys-191) is an N6-carboxylysine. Residue His-284 is the Proton acceptor of the active site. Substrate is bound by residues Arg-285, His-317, and Ser-369.

Belongs to the RuBisCO large chain family. Type I subfamily. Heterohexadecamer of 8 large chains and 8 small chains; disulfide-linked. The disulfide link is formed within the large subunit homodimers. The cofactor is Mg(2+). The disulfide bond which can form in the large chain dimeric partners within the hexadecamer appears to be associated with oxidative stress and protein turnover.

Its subcellular location is the plastid. It localises to the chloroplast. The enzyme catalyses 2 (2R)-3-phosphoglycerate + 2 H(+) = D-ribulose 1,5-bisphosphate + CO2 + H2O. It catalyses the reaction D-ribulose 1,5-bisphosphate + O2 = 2-phosphoglycolate + (2R)-3-phosphoglycerate + 2 H(+). Functionally, ruBisCO catalyzes two reactions: the carboxylation of D-ribulose 1,5-bisphosphate, the primary event in carbon dioxide fixation, as well as the oxidative fragmentation of the pentose substrate in the photorespiration process. Both reactions occur simultaneously and in competition at the same active site. In Cornus florida (Flowering dogwood), this protein is Ribulose bisphosphate carboxylase large chain.